The sequence spans 188 residues: SRP-independent targeting protein 3 (188 aa).

The chain crosses the membrane as a helical span at residues 27 to 47 (TIIMYIRILYCSSIGISWIIY). Ser-157 is subject to Phosphoserine. The tract at residues 157–188 (SLFGGMGQTGPKTDKKSIEEAERAGNAGVKAE) is disordered. The span at 168–179 (KTDKKSIEEAER) shows a compositional bias: basic and acidic residues.

Belongs to the PHO88 family. In terms of assembly, interacts with ENV10/SND2. ENV10/SND2 and PHO88/SND3 form a complex with the translocon in the endoplasmic reticulum membrane.

It is found in the endoplasmic reticulum membrane. It localises to the mitochondrion. In terms of biological role, functions in the SND pathway, a SRP (signal recognition particle) and GET (guided entry of tail-anchored proteins) independent pathway for targeting a broad range of substrate proteins to the endoplasmic reticulum. SND functions in parallel to GET in targeting proteins with downstream hydrophobic motifs. Involved in inorganic phosphate uptake. Also involved in telomere length regulation and maintenance. In Saccharomyces cerevisiae (strain ATCC 204508 / S288c) (Baker's yeast), this protein is SRP-independent targeting protein 3.